The primary structure comprises 517 residues: L-amino-acid oxidase (517 aa).

A signal peptide spans 1 to 18 (MNVFFMFSLLFLAALGSC). A disulfide bond links Cys-29 and Cys-192. FAD-binding positions include 62–63 (MA), 82–83 (EA), Arg-90, and 106–109 (GPMR). Position 109 (Arg-109) interacts with substrate. Asn-191 is a glycosylation site (N-linked (GlcNAc...) asparagine). Residue Val-280 participates in FAD binding. Cysteines 350 and 431 form a disulfide. Residue Tyr-391 participates in substrate binding. FAD contacts are provided by residues Glu-476 and 483 to 488 (GWLDST). Position 483–484 (483–484 (GW)) interacts with substrate.

Belongs to the flavin monoamine oxidase family. FIG1 subfamily. As to quaternary structure, homodimer; non-covalently linked. FAD is required as a cofactor. N-glycosylated. Expressed by the venom gland.

It localises to the secreted. It carries out the reaction an L-alpha-amino acid + O2 + H2O = a 2-oxocarboxylate + H2O2 + NH4(+). Its function is as follows. Catalyzes an oxidative deamination of predominantly hydrophobic and aromatic L-amino acids, thus producing hydrogen peroxide that may contribute to the diverse toxic effects of this enzyme. Exhibits diverse biological activities, such as hemorrhage, hemolysis, edema, apoptosis of vascular endothelial cells or tumor cell lines, antiparasitic activities, as well as regulation of platelet aggregation. Effects of snake L-amino oxidases on platelets are controversial, since they either induce aggregation or inhibit agonist-induced aggregation. These different effects are probably due to different experimental conditions. This protein has antibacterial activities. The protein is L-amino-acid oxidase of Pseudechis australis (Mulga snake).